The primary structure comprises 188 residues: UPF0301 protein Smal_0940 (188 aa).

It belongs to the UPF0301 (AlgH) family.

This Stenotrophomonas maltophilia (strain R551-3) protein is UPF0301 protein Smal_0940.